Here is a 438-residue protein sequence, read N- to C-terminus: Argininosuccinate lyase (438 aa).

This sequence belongs to the lyase 1 family. Argininosuccinate lyase subfamily.

It is found in the cytoplasm. The enzyme catalyses 2-(N(omega)-L-arginino)succinate = fumarate + L-arginine. Its pathway is amino-acid biosynthesis; L-arginine biosynthesis; L-arginine from L-ornithine and carbamoyl phosphate: step 3/3. This Clostridium tetani (strain Massachusetts / E88) protein is Argininosuccinate lyase.